The sequence spans 512 residues: 2-isopropylmalate synthase (512 aa).

Residues 5 to 267 (LYIFDTTLRD…DSRVDATQIV (263 aa)) form the Pyruvate carboxyltransferase domain. Residues aspartate 14, histidine 202, histidine 204, and asparagine 238 each contribute to the Mn(2+) site. A regulatory domain region spans residues 393–512 (KLVSLKVVSE…EEKMNAQAAA (120 aa)).

It belongs to the alpha-IPM synthase/homocitrate synthase family. LeuA type 1 subfamily. As to quaternary structure, homodimer. Mn(2+) is required as a cofactor.

It is found in the cytoplasm. It catalyses the reaction 3-methyl-2-oxobutanoate + acetyl-CoA + H2O = (2S)-2-isopropylmalate + CoA + H(+). It participates in amino-acid biosynthesis; L-leucine biosynthesis; L-leucine from 3-methyl-2-oxobutanoate: step 1/4. Its function is as follows. Catalyzes the condensation of the acetyl group of acetyl-CoA with 3-methyl-2-oxobutanoate (2-ketoisovalerate) to form 3-carboxy-3-hydroxy-4-methylpentanoate (2-isopropylmalate). This chain is 2-isopropylmalate synthase, found in Chromobacterium violaceum (strain ATCC 12472 / DSM 30191 / JCM 1249 / CCUG 213 / NBRC 12614 / NCIMB 9131 / NCTC 9757 / MK).